A 548-amino-acid chain; its full sequence is Chaperonin GroEL (548 aa).

ATP is bound by residues 30–33, Lys-51, 87–91, Gly-415, 479–481, and Asp-495; these read TLGP, DGTTT, and NAA. Positions 524–548 are disordered; that stretch reads LPKEDKSSDSSSSPAGGMGGMGGMM. The span at 539 to 548 shows a compositional bias: gly residues; sequence GGMGGMGGMM.

The protein belongs to the chaperonin (HSP60) family. Forms a cylinder of 14 subunits composed of two heptameric rings stacked back-to-back. Interacts with the co-chaperonin GroES.

It localises to the cytoplasm. It carries out the reaction ATP + H2O + a folded polypeptide = ADP + phosphate + an unfolded polypeptide.. Together with its co-chaperonin GroES, plays an essential role in assisting protein folding. The GroEL-GroES system forms a nano-cage that allows encapsulation of the non-native substrate proteins and provides a physical environment optimized to promote and accelerate protein folding. The chain is Chaperonin GroEL from Buchnera aphidicola subsp. Acyrthosiphon pisum (strain 5A).